We begin with the raw amino-acid sequence, 308 residues long: Acetyl-coenzyme A carboxylase carboxyl transferase subunit beta (308 aa).

Residues 25–294 (VWTKCTSCEQ…PLVVSVNDAP (270 aa)) form the CoA carboxyltransferase N-terminal domain. Residues C29, C32, C48, and C51 each coordinate Zn(2+). The segment at 29–51 (CTSCEQVLYYAELERNLEVCPKC) adopts a C4-type zinc-finger fold.

This sequence belongs to the AccD/PCCB family. As to quaternary structure, acetyl-CoA carboxylase is a heterohexamer composed of biotin carboxyl carrier protein (AccB), biotin carboxylase (AccC) and two subunits each of ACCase subunit alpha (AccA) and ACCase subunit beta (AccD). Zn(2+) is required as a cofactor.

Its subcellular location is the cytoplasm. It catalyses the reaction N(6)-carboxybiotinyl-L-lysyl-[protein] + acetyl-CoA = N(6)-biotinyl-L-lysyl-[protein] + malonyl-CoA. It functions in the pathway lipid metabolism; malonyl-CoA biosynthesis; malonyl-CoA from acetyl-CoA: step 1/1. Its function is as follows. Component of the acetyl coenzyme A carboxylase (ACC) complex. Biotin carboxylase (BC) catalyzes the carboxylation of biotin on its carrier protein (BCCP) and then the CO(2) group is transferred by the transcarboxylase to acetyl-CoA to form malonyl-CoA. This Vibrio cholerae serotype O1 (strain ATCC 39315 / El Tor Inaba N16961) protein is Acetyl-coenzyme A carboxylase carboxyl transferase subunit beta.